Here is a 172-residue protein sequence, read N- to C-terminus: Adenine phosphoribosyltransferase (172 aa).

The protein belongs to the purine/pyrimidine phosphoribosyltransferase family. In terms of assembly, homodimer.

The protein localises to the cytoplasm. It carries out the reaction AMP + diphosphate = 5-phospho-alpha-D-ribose 1-diphosphate + adenine. Its pathway is purine metabolism; AMP biosynthesis via salvage pathway; AMP from adenine: step 1/1. Its function is as follows. Catalyzes a salvage reaction resulting in the formation of AMP, that is energically less costly than de novo synthesis. This is Adenine phosphoribosyltransferase from Clostridium botulinum (strain Loch Maree / Type A3).